A 56-amino-acid chain; its full sequence is Ferredoxin (56 aa).

4Fe-4S ferredoxin-type domains lie at 2–28 and 29–56; these read AYKI…SQGD and SIFV…PVQE. Positions 9, 12, 15, 19, 38, 41, 44, and 48 each coordinate [4Fe-4S] cluster.

Requires [4Fe-4S] cluster as cofactor.

In terms of biological role, ferredoxins are iron-sulfur proteins that transfer electrons in a wide variety of metabolic reactions. The polypeptide is Ferredoxin (Clostridium pasteurianum).